Here is an 889-residue protein sequence, read N- to C-terminus: TATA box-binding protein-associated factor RNA polymerase I subunit B (889 aa).

The segment at 1-33 (MAPETNEKCKACGGFNFSMIDGFKYCDRCGTLL) adopts an RRN7-type zinc-finger fold. 4 residues coordinate Zn(2+): C9, C12, C26, and C29. Positions 35–101 (NFEELEAEEG…DFFSRQALKN (67 aa)) are B-reader. A B-linker region spans residues 102 to 113 (DELAFPHESTPD). Residues 114 to 351 (YLYRLGLRLA…SAKEQETKEA (238 aa)) form an N-terminal cyclin fold region. The segment at 229–253 (NLDLDSEEDEEEEENPNLNKSMENL) is disordered. Over residues 230–243 (LDLDSEEDEEEEEN) the composition is skewed to acidic residues. Residues 352 to 510 (MTKVDYAEPY…LLVFRLTFDI (159 aa)) are C-terminal cyclin fold.

The protein belongs to the RRN7/TAF1B family.

It localises to the nucleus. It is found in the nucleolus. Component of RNA polymerase I core factor complex that acts as a GTF2B/TFIIB-like factor and plays a key role in multiple steps during transcription initiation such as pre-initiation complex (PIC) assembly and postpolymerase recruitment events in polymerase I (Pol I) transcription. Binds rDNA promoters and plays a role in Pol I recruitment. This Caenorhabditis briggsae protein is TATA box-binding protein-associated factor RNA polymerase I subunit B.